Reading from the N-terminus, the 352-residue chain is Ni-sirohydrochlorin a,c-diamide reductive cyclase complex, component CfbD (352 aa).

This sequence belongs to the NifD/NifK/NifE/NifN family. Homodimer or monomer. The Ni-sirohydrochlorin a,c-diamide reductive cyclase complex is composed of a NifH homolog component CfbC and a NifD homolog component CfbD. [4Fe-4S] cluster serves as cofactor.

The enzyme catalyses Ni-sirohydrochlorin a,c-diamide + 3 AH2 + ATP + H2O = 15,17(3)-seco-F430-17(3)-acid + 3 A + ADP + phosphate. Functionally, involved in the biosynthesis of the unique nickel-containing tetrapyrrole coenzyme F430, the prosthetic group of methyl-coenzyme M reductase (MCR), which plays a key role in methanogenesis and anaerobic methane oxidation. Catalyzes both the six-electron reduction of the tetrahydroporphyrin ring system and the gamma-lactamization of the c-acetamide side chain of Ni-sirohydrochlorin a,c-diamide to yield 15,17(3)-seco-F430-17(3)-acid (seco-F430), the last intermediate in the biosynthesis of the coenzyme F430. This is Ni-sirohydrochlorin a,c-diamide reductive cyclase complex, component CfbD from Methanocaldococcus jannaschii (strain ATCC 43067 / DSM 2661 / JAL-1 / JCM 10045 / NBRC 100440) (Methanococcus jannaschii).